The chain runs to 318 residues: MANTLEQFKSITTIVADTGDIEAIKRYQPEDATTNPSLILKAAQIPDYAHLIENAIEWAKTQSSQIDQQVEDAGDKLAVNIGVEILKIVPGRISTEVDARLSFDKAGSIAKAHKLIKLYQEAGIDKSRILIKLASTWEGICAAKELEQEGINCNLTLLFSFAQARACAEAGVYLISPFVGRILDWYKKDTGLEYSATEDPGVVSVTEIYNYYKRHGFNTVVMGASFRNTGEIIELAGCDRLTIGPALLEEMANSQTEVVRKLIPAETTVEAGEPLTEAQFRWEFNENPMAVEKLAEGIRNFAIDQGKLEVMLKEKLTS.

The active-site Schiff-base intermediate with substrate is Lys-132.

It belongs to the transaldolase family. Type 1 subfamily. In terms of assembly, homodimer.

Its subcellular location is the cytoplasm. The catalysed reaction is D-sedoheptulose 7-phosphate + D-glyceraldehyde 3-phosphate = D-erythrose 4-phosphate + beta-D-fructose 6-phosphate. Its pathway is carbohydrate degradation; pentose phosphate pathway; D-glyceraldehyde 3-phosphate and beta-D-fructose 6-phosphate from D-ribose 5-phosphate and D-xylulose 5-phosphate (non-oxidative stage): step 2/3. Transaldolase is important for the balance of metabolites in the pentose-phosphate pathway. This chain is Transaldolase, found in Shewanella woodyi (strain ATCC 51908 / MS32).